Reading from the N-terminus, the 147-residue chain is 3-hydroxyacyl-[acyl-carrier-protein] dehydratase FabZ (147 aa).

H51 is a catalytic residue.

This sequence belongs to the thioester dehydratase family. FabZ subfamily.

Its subcellular location is the cytoplasm. The catalysed reaction is a (3R)-hydroxyacyl-[ACP] = a (2E)-enoyl-[ACP] + H2O. Functionally, involved in unsaturated fatty acids biosynthesis. Catalyzes the dehydration of short chain beta-hydroxyacyl-ACPs and long chain saturated and unsaturated beta-hydroxyacyl-ACPs. The polypeptide is 3-hydroxyacyl-[acyl-carrier-protein] dehydratase FabZ (Anaplasma marginale (strain Florida)).